The sequence spans 101 residues: Urinary protein 3 (101 aa).

The first 21 residues, 1–21 (MGKHILLLPLGLSLLMSSLLA), serve as a signal peptide directing secretion. Positions 22–99 (LQCFRCISFD…CSATPFCNMV (78 aa)) constitute a UPAR/Ly6 domain. 5 disulfide bridges follow: Cys-24-Cys-51, Cys-27-Cys-36, Cys-43-Cys-70, Cys-73-Cys-89, and Cys-90-Cys-96.

The protein resides in the secreted. The protein is Urinary protein 3 of Rattus norvegicus (Rat).